Here is a 291-residue protein sequence, read N- to C-terminus: Phosphate import ATP-binding protein PstB (291 aa).

In terms of domain architecture, ABC transporter spans 43–286; sequence ANVKDLSFWY…PKHAMTEEYI (244 aa). 75 to 82 is a binding site for ATP; it reads GASGCGKS.

It belongs to the ABC transporter superfamily. Phosphate importer (TC 3.A.1.7) family. In terms of assembly, the complex is composed of two ATP-binding proteins (PstB), two transmembrane proteins (PstC and PstA) and a solute-binding protein (PstS).

It is found in the cell inner membrane. The catalysed reaction is phosphate(out) + ATP + H2O = ADP + 2 phosphate(in) + H(+). Part of the ABC transporter complex PstSACB involved in phosphate import. Responsible for energy coupling to the transport system. This chain is Phosphate import ATP-binding protein PstB, found in Alcaligenes faecalis.